Here is a 148-residue protein sequence, read N- to C-terminus: Large ribosomal subunit protein bL9 (148 aa).

It belongs to the bacterial ribosomal protein bL9 family.

Functionally, binds to the 23S rRNA. The sequence is that of Large ribosomal subunit protein bL9 from Listeria welshimeri serovar 6b (strain ATCC 35897 / DSM 20650 / CCUG 15529 / CIP 8149 / NCTC 11857 / SLCC 5334 / V8).